A 3391-amino-acid chain; its full sequence is Genome polyprotein (3391 aa).

The tract at residues 1 to 15 (MNNQRKKARSTPFNM) is interaction with host EXOC1. The Cytoplasmic segment spans residues 1-101 (MNNQRKKARS…LNILNRRRRT (101 aa)). A hydrophobic; homodimerization of capsid protein C region spans residues 37–72 (MLQGRGPLKLFMALVAFLRFLTIPPTAGILKRWGTI). A propeptide spans 101-114 (TAGVIIMLIPTAMA) (ER anchor for the capsid protein C, removed in mature form by serine protease NS3). Residues 102 to 119 (AGVIIMLIPTAMAFHLTT) form a helical membrane-spanning segment. The Extracellular segment spans residues 120–241 (RNGEPHMIVG…KHVQRIETWI (122 aa)). An N-linked (GlcNAc...) asparagine; by host glycan is attached at Asn-183. A helical transmembrane segment spans residues 242 to 259 (LRHPGFTIMAAILAYTIG). The Cytoplasmic segment spans residues 260–265 (TTHFQR). The helical transmembrane segment at 266 to 280 (ALIFILLTAVAPSMT) threads the bilayer. Residues 281–725 (MRCIGISNRD…LHQVFGAIYG (445 aa)) are Extracellular-facing. Cystine bridges form between Cys-283–Cys-310, Cys-340–Cys-401, Cys-354–Cys-385, and Cys-372–Cys-396. The N-linked (GlcNAc...) asparagine; by host glycan is linked to Asn-347. The tract at residues 378-391 (DRGWGNGCGLFGKG) is fusion peptide. A glycan (N-linked (GlcNAc...) asparagine; by host) is linked at Asn-433. Disulfide bonds link Cys-465–Cys-565 and Cys-582–Cys-613. A helical transmembrane segment spans residues 726-746 (AAFSGVSWTMKILIGVIITWI). Residues 747 to 752 (GMNSRS) lie on the Cytoplasmic side of the membrane. A helical membrane pass occupies residues 753 to 773 (TSLSVSLVLVGVVTLYLGAMV). Residues 774–1195 (QADSGCVVSW…MVGATMTDDI (422 aa)) are Extracellular-facing. Cystine bridges form between Cys-779-Cys-790, Cys-830-Cys-918, Cys-954-Cys-998, Cys-1055-Cys-1104, Cys-1066-Cys-1088, and Cys-1087-Cys-1091. N-linked (GlcNAc...) asparagine; by host glycans are attached at residues Asn-905 and Asn-982. Asn-1134 carries an N-linked (GlcNAc...) asparagine; by host glycan. Residues 1196-1220 (GMGVTYLALLAAFKVRPTFAAGLLL) form a helical membrane-spanning segment. Residues 1221–1226 (RKLTSK) lie on the Cytoplasmic side of the membrane. The chain crosses the membrane as a helical span at residues 1227–1245 (ELMMATIGIALLSQSTIPE). The Lumenal segment spans residues 1246–1269 (TILELTDALALGMMVLKIVRNMEK). A helical transmembrane segment spans residues 1270 to 1290 (YQLAVTIMAILCVPNAVILQN). Residue Ala-1291 is a topological domain, cytoplasmic. Residues 1292-1310 (WKVSCTILAAVSVSPLLLT) traverse the membrane as a helical segment. The Lumenal portion of the chain corresponds to 1311–1317 (SSQQKAD). A helical membrane pass occupies residues 1318-1338 (WIPLALTIKGLNPTAIFLTTL). The Cytoplasmic segment spans residues 1339 to 1346 (SRTSKKRS). Residues 1347–1367 (WPLNEAIMAVGMVSILASSLL) traverse the membrane as a helical segment. At 1368–1370 (KND) the chain is on the lumenal side. Residues 1371-1391 (IPMTGPLVAGGLLTVCYVLTG) form a helical membrane-spanning segment. Over 1392–1447 (RSADLELERAADVKWEDQAEISGSSPILSITISEDGSMSIKNEEEEQTLTILIRTG) the chain is Cytoplasmic. The interacts with and activates NS3 protease stretch occupies residues 1398–1437 (LERAADVKWEDQAEISGSSPILSITISEDGSMSIKNEEEE). Positions 1448–1468 (LLVISGVFPVSIPITAAAWYL) form an intramembrane region, helical. At 1469–2147 (WEVKKQRAGV…LSELPETLET (679 aa)) the chain is on the cytoplasmic side. Positions 1476–1653 (AGVLWDVPSP…EKSIEDNPEI (178 aa)) constitute a Peptidase S7 domain. Catalysis depends on charge relay system; for serine protease NS3 activity residues His-1526, Asp-1550, and Ser-1610. Residues 1655–1811 (DDIFRKKRLT…QSNAPIMDEE (157 aa)) form the Helicase ATP-binding domain. The tract at residues 1659 to 1662 (RKKR) is important for RNA-binding. 1668 to 1675 (LHPGAGKT) lines the ATP pocket. A DEAH box motif is present at residues 1759–1762 (DEAH). One can recognise a Helicase C-terminal domain in the interval 1821-1988 (SGHEWVTDFK…IIPSMFEPER (168 aa)). At Lys-1863 the chain carries N6-acetyllysine; by host. The chain crosses the membrane as a helical span at residues 2148-2168 (LLLLTLLATVTGGIFLFLMSG). The Lumenal segment spans residues 2169 to 2170 (KG). An intramembrane region (helical) is located at residues 2171-2191 (IGKMTLGMCCIITASILLWYA). Position 2192 (Gln-2192) is a topological domain, lumenal. Residues 2193–2213 (IQPHWIAASIILEFFLIVLLI) form a helical membrane-spanning segment. Residues 2214–2228 (PEPEKQRTPQDNQLT) lie on the Cytoplasmic side of the membrane. A helical transmembrane segment spans residues 2229-2249 (YVVIAILTVVAATMANEMGFL). Topologically, residues 2250-2274 (EKTKKDLGLGSITTQESESNILDID) are lumenal. Residues 2275-2295 (LRPASAWTLYAVATTFVTPML) constitute an intramembrane region (helical). Residues 2296-2316 (RHSIENSSVNVSLTAIANQAT) are Lumenal-facing. N-linked (GlcNAc...) asparagine; by host glycosylation is found at Asn-2301 and Asn-2305. An intramembrane region (helical) is located at residues 2317-2337 (VLMGLGKGWPLSKIHIGVPLL). The Lumenal segment spans residues 2338 to 2347 (AIGCYSQVNP). The chain crosses the membrane as a helical span at residues 2348-2368 (ITLTAALLLLVAHYAIIGPGL). Over 2369–2413 (QAKATREAQKRAAAGIMKNPTVDGITVIDLDPIPYDPKFEKQLGQ) the chain is Cytoplasmic. The chain crosses the membrane as a helical span at residues 2414-2434 (VMLLILCVTQVLMMRTTWALC). The Lumenal portion of the chain corresponds to 2435 to 2459 (EALTLATGPISTLWEGNPGRFWNTT). N-linked (GlcNAc...) asparagine; by host glycosylation is present at Asn-2457. The helical transmembrane segment at 2460–2480 (IAVSMANIFRGSYLAGAGLLF) threads the bilayer. At 2481-3391 (SIMKNTTNTR…REEEEAGVLW (911 aa)) the chain is on the cytoplasmic side. The 263-residue stretch at 2493–2755 (TGNIGETLGE…DVDLGSGTRN (263 aa)) folds into the mRNA cap 0-1 NS5-type MT domain. S-adenosyl-L-methionine is bound at residue Ser-2547. Phosphoserine is present on Ser-2547. Lys-2552 (for 2'-O-MTase activity) is an active-site residue. The short motif at 2568–2571 (VVDL) is the SUMO-interacting motif element. S-adenosyl-L-methionine-binding residues include Gly-2577, Trp-2578, Thr-2595, Lys-2596, Asp-2622, and Val-2623. The active-site For 2'-O-MTase activity is the Asp-2637. Ile-2638 contributes to the S-adenosyl-L-methionine binding site. Residues Lys-2672 and Glu-2708 each act as for 2'-O-MTase activity in the active site. Tyr-2710 provides a ligand contact to S-adenosyl-L-methionine. 4 residues coordinate Zn(2+): Glu-2929, His-2933, Cys-2938, and Cys-2941. The 150-residue stretch at 3020 to 3169 (AMYADDTAGW…PLDDRFASAL (150 aa)) folds into the RdRp catalytic domain. Positions 3203, 3219, and 3338 each coordinate Zn(2+).

The protein in the N-terminal section; belongs to the class I-like SAM-binding methyltransferase superfamily. mRNA cap 0-1 NS5-type methyltransferase family. Homodimer. Interacts (via N-terminus) with host EXOC1 (via C-terminus); this interaction results in EXOC1 degradation through the proteasome degradation pathway. As to quaternary structure, forms heterodimers with envelope protein E in the endoplasmic reticulum and Golgi. In terms of assembly, homodimer; in the endoplasmic reticulum and Golgi. Interacts with protein prM. Interacts with non-structural protein 1. Homodimer; Homohexamer when secreted. Interacts with envelope protein E. Interacts with host PRKAA1. As to quaternary structure, interacts (via N-terminus) with serine protease NS3. In terms of assembly, forms a heterodimer with serine protease NS3. May form homooligomers. Forms a heterodimer with NS2B. Interacts with NS4B. Interacts with unphosphorylated RNA-directed RNA polymerase NS5; this interaction stimulates RNA-directed RNA polymerase NS5 guanylyltransferase activity. Interacts with host SHFL. As to quaternary structure, interacts with host MAVS; this interaction inhibits the synthesis of IFN-beta. Interacts with host SHFL. Interacts with host AUP1; the interaction occurs in the presence of Dengue virus NS4B and induces lipophagy which facilitates production of virus progeny particles. May interact with host SRPRA and SEC61G. In terms of assembly, interacts with serine protease NS3. Homodimer. Interacts with host STAT2; this interaction inhibits the phosphorylation of the latter, and, when all viral proteins are present (polyprotein), targets STAT2 for degradation. Interacts with serine protease NS3. Interacts with host PAF1 complex; the interaction may prevent the recruitment of the PAF1 complex to interferon-responsive genes, and thus reduces the immune response. In terms of processing, specific enzymatic cleavages in vivo yield mature proteins. Cleavages in the lumen of endoplasmic reticulum are performed by host signal peptidase, whereas cleavages in the cytoplasmic side are performed by serine protease NS3. Signal cleavage at the 2K-4B site requires a prior NS3 protease-mediated cleavage at the 4A-2K site. Cleaved in post-Golgi vesicles by a host furin, releasing the mature small envelope protein M, and peptide pr. This cleavage is incomplete as up to 30% of viral particles still carry uncleaved prM. Post-translationally, N-glycosylated. In terms of processing, N-glycosylated. The excreted form is glycosylated and this is required for efficient secretion of the protein from infected cells. Acetylated by host KAT5. Acetylation modulates NS3 RNA-binding and unwinding activities and plays an important positive role for viral replication. Post-translationally, sumoylation of RNA-directed RNA polymerase NS5 increases NS5 protein stability allowing proper viral RNA replication. In terms of processing, phosphorylated on serines residues. This phosphorylation may trigger NS5 nuclear localization.

Its subcellular location is the virion. It is found in the host nucleus. The protein resides in the host cytoplasm. The protein localises to the host perinuclear region. It localises to the secreted. Its subcellular location is the virion membrane. It is found in the host endoplasmic reticulum membrane. The protein resides in the host mitochondrion. It carries out the reaction Selective hydrolysis of -Xaa-Xaa-|-Yaa- bonds in which each of the Xaa can be either Arg or Lys and Yaa can be either Ser or Ala.. The catalysed reaction is RNA(n) + a ribonucleoside 5'-triphosphate = RNA(n+1) + diphosphate. The enzyme catalyses a ribonucleoside 5'-triphosphate + H2O = a ribonucleoside 5'-diphosphate + phosphate + H(+). It catalyses the reaction ATP + H2O = ADP + phosphate + H(+). It carries out the reaction a 5'-end (5'-triphosphoguanosine)-ribonucleoside in mRNA + S-adenosyl-L-methionine = a 5'-end (N(7)-methyl 5'-triphosphoguanosine)-ribonucleoside in mRNA + S-adenosyl-L-homocysteine. The catalysed reaction is a 5'-end (N(7)-methyl 5'-triphosphoguanosine)-ribonucleoside in mRNA + S-adenosyl-L-methionine = a 5'-end (N(7)-methyl 5'-triphosphoguanosine)-(2'-O-methyl-ribonucleoside) in mRNA + S-adenosyl-L-homocysteine + H(+). Functionally, plays a role in virus budding by binding to the cell membrane and gathering the viral RNA into a nucleocapsid that forms the core of a mature virus particle. During virus entry, may induce genome penetration into the host cytoplasm after hemifusion induced by the surface proteins. Can migrate to the cell nucleus where it modulates host functions. Overcomes the anti-viral effects of host EXOC1 by sequestering and degrading the latter through the proteasome degradation pathway. Its function is as follows. Inhibits RNA silencing by interfering with host Dicer. In terms of biological role, prevents premature fusion activity of envelope proteins in trans-Golgi by binding to envelope protein E at pH6.0. After virion release in extracellular space, gets dissociated from E dimers. Acts as a chaperone for envelope protein E during intracellular virion assembly by masking and inactivating envelope protein E fusion peptide. prM is the only viral peptide matured by host furin in the trans-Golgi network probably to avoid catastrophic activation of the viral fusion activity in acidic Golgi compartment prior to virion release. prM-E cleavage is inefficient, and many virions are only partially matured. These uncleaved prM would play a role in immune evasion. Functionally, may play a role in virus budding. Exerts cytotoxic effects by activating a mitochondrial apoptotic pathway through M ectodomain. May display a viroporin activity. Its function is as follows. Binds to host cell surface receptor and mediates fusion between viral and cellular membranes. Envelope protein is synthesized in the endoplasmic reticulum in the form of heterodimer with protein prM. They play a role in virion budding in the ER, and the newly formed immature particle is covered with 60 spikes composed of heterodimer between precursor prM and envelope protein E. The virion is transported to the Golgi apparatus where the low pH causes dissociation of PrM-E heterodimers and formation of E homodimers. prM-E cleavage is inefficient, and many virions are only partially matured. These uncleaved prM would play a role in immune evasion. In terms of biological role, involved in immune evasion, pathogenesis and viral replication. Once cleaved off the polyprotein, is targeted to three destinations: the viral replication cycle, the plasma membrane and the extracellular compartment. Essential for viral replication. Required for formation of the replication complex and recruitment of other non-structural proteins to the ER-derived membrane structures. Excreted as a hexameric lipoparticle that plays a role against host immune response. Antagonizing the complement function. Binds to the host macrophages and dendritic cells. Inhibits signal transduction originating from Toll-like receptor 3 (TLR3). Involved in immune evasion, pathogenesis and viral replication. Once cleaved off the polyprotein, is targeted to three destinations: the viral replication cycle, the plasma membrane and the extracellular compartment. Essential for viral replication. Required for formation of the replication complex and recruitment of other non-structural proteins to the ER-derived membrane structures. Excreted as a hexameric lipoparticle that plays a role against host immune response. Antagonizing the complement function. Binds to the host macrophages and dendritic cells. Inhibits signal transduction originating from Toll-like receptor 3 (TLR3). Mediates complement activation, which may contribute to the pathogenesis of the vascular leakage that occurs in severe dengue disease. Activates autophagy through the AMPK/ERK/mTOR signaling pathway. Mechanistically, acts as the assembly platform for STK11-AMPK interactions and promotes STK11-AMPK interactions. In turn, promotes phosphorylation of the AMPK kinase structural domain and activates AMPK, thereby positively regulating the AMPK/ERK/mTOR signaling pathway and inducing autophagy. Functionally, component of the viral RNA replication complex that functions in virion assembly and antagonizes the host immune response. Its function is as follows. Required cofactor for the serine protease function of NS3. May have membrane-destabilizing activity and form viroporins. In terms of biological role, displays three enzymatic activities: serine protease, NTPase and RNA helicase. NS3 serine protease, in association with NS2B, performs its autocleavage and cleaves the polyprotein at dibasic sites in the cytoplasm: C-prM, NS2A-NS2B, NS2B-NS3, NS3-NS4A, NS4A-2K and NS4B-NS5. NS3 RNA helicase binds RNA and unwinds dsRNA in the 3' to 5' direction. Regulates the ATPase activity of the NS3 helicase activity. NS4A allows NS3 helicase to conserve energy during unwinding. Plays a role in the inhibition of the host innate immune response. Interacts with host MAVS and thereby prevents the interaction between RIGI and MAVS. In turn, IFN-beta production is impaired. Interacts with host AUP1 which mediates induction of lipophagy in host cells and facilitates production of virus progeny particles. Functionally, functions as a signal peptide for NS4B and is required for the interferon antagonism activity of the latter. Its function is as follows. Induces the formation of ER-derived membrane vesicles where the viral replication takes place. Inhibits interferon (IFN)-induced host STAT1 phosphorylation and nuclear translocation, thereby preventing the establishment of cellular antiviral state by blocking the IFN-alpha/beta pathway. In terms of biological role, replicates the viral (+) and (-) RNA genome, and performs the capping of genomes in the cytoplasm. NS5 methylates viral RNA cap at guanine N-7 and ribose 2'-O positions. Besides its role in RNA genome replication, also prevents the establishment of cellular antiviral state by blocking the interferon-alpha/beta (IFN-alpha/beta) signaling pathway. Inhibits host TYK2 and STAT2 phosphorylation, thereby preventing activation of JAK-STAT signaling pathway. May reduce immune responses by preventing the recruitment of the host PAF1 complex to interferon-responsive genes. This Dengue virus type 2 (strain Jamaica/1409/1983) (DENV-2) protein is Genome polyprotein.